The sequence spans 425 residues: uncharacterized protein (425 aa).

The CHY-type zinc finger occupies 135 to 202; the sequence is KEQEILGCSH…AAQYCKYCKN (68 aa). Zn(2+) is bound by residues cysteine 142, histidine 144, cysteine 153, cysteine 156, cysteine 162, cysteine 165, histidine 166, histidine 172, cysteine 184, cysteine 187, cysteine 197, cysteine 200, cysteine 209, cysteine 212, histidine 225, cysteine 226, cysteine 229, cysteine 232, histidine 244, cysteine 245, cysteine 248, cysteine 251, histidine 260, and cysteine 262. The CTCHY-type zinc-finger motif lies at 204 to 270; sequence MGRYYCNKCK…RCIERSTDCN (67 aa). The RING-type; atypical zinc-finger motif lies at 271–313; that stretch reads CPICGEYMFNSRERVIFLSCSHPLHQRCHEEYIRTNYRCPTCY.

This is an uncharacterized protein from Schizosaccharomyces pombe (strain 972 / ATCC 24843) (Fission yeast).